Reading from the N-terminus, the 485-residue chain is MECTTVKLSVALGEEVVQLSTLDQQAQRAYANLLLVFKLSQNADADHVFSSLKRGLGAALTEVPDFASLVVPVPGSKKNELQLRLGPDSGVPFKLVRQDALASHLEKHSSGGTYAELARDNFPLASVPTELLFNQLPASELACARGLPGLLAQASVVDGGLIMGLSWHHTVSDARGINTLLSSWARHTKMWAGQGTIGSPSAAPEPTRDRWRLTCGPRDVHVSHFSDYQINAAARTPLSPAAAHLLDRPDTTNATAGLSTWYFSKKALSSLRGELGRAAADGSDAVQFTSGEAVSALVWKHLSLARLLHQQLAHETSLFASRIDFRGRAKPAFADGYIGNINEPNARTRMRLAEVCAPSSPASLVALAAAVREAIGAMDEKTMREFIGLVEGSSSVTDVYWDYNTFPGPDLVVTDMSGMDTLRQEWGGDLGQPVCIRSGSREKGVAYFLPQDAQGGFEVQLQCTAEDLGRLKDDSLFTKYAEFRS.

Histidine 169 serves as the catalytic Proton acceptor.

It belongs to the plant acyltransferase family. In terms of assembly, monomer.

Its pathway is secondary metabolite biosynthesis. Its function is as follows. Acyltransferase; part of the gene cluster that mediates the biosynthesis of beauveriolides I and III, cyclodepsipeptides acting as inhibitors of the acyl-CoA:cholesterol acyltransferase. The HR-PKS cm3B initiates the biosynthesis of beauveriolides by iteratively catalyzing the formation of the linear polyketide chain. The ATP-dependent acetyl-CoA ligase cm3D converts the polyketide carboxylic acid to a CoA thioester which id shuttled to the first T domain in the NRPS cm3A by the acetyltransferase cm3C. Cm3A contains 13 domains and assembles the polyketide chain, L-phenylalanine, L-alanine, and D-leucine (or D-allo-isoleucine) to form beauveriolide I (or beauveriolide III). The production of both beauveriolides I and III suggests the substrate adaptability of cm3B, using different amino acids as substrates. The sequence is that of Acyltransferase cm3D from Cordyceps militaris (strain CM01) (Caterpillar fungus).